Reading from the N-terminus, the 882-residue chain is DNA mismatch repair protein MutS (882 aa).

627 to 634 serves as a coordination point for ATP; that stretch reads GPNMAGKS.

It belongs to the DNA mismatch repair MutS family.

This protein is involved in the repair of mismatches in DNA. It is possible that it carries out the mismatch recognition step. This protein has a weak ATPase activity. The polypeptide is DNA mismatch repair protein MutS (Anaeromyxobacter dehalogenans (strain 2CP-1 / ATCC BAA-258)).